Consider the following 176-residue polypeptide: Inner membrane-spanning protein YciB (176 aa).

A run of 5 helical transmembrane segments spans residues 23-43 (MIAA…FLYW), 50-70 (TMQW…IVLG), 74-94 (FIMW…LGSH), 119-139 (LTYM…FVFT), and 150-170 (MFGS…YLST).

It belongs to the YciB family.

The protein resides in the cell inner membrane. In terms of biological role, plays a role in cell envelope biogenesis, maintenance of cell envelope integrity and membrane homeostasis. The sequence is that of Inner membrane-spanning protein YciB from Neisseria gonorrhoeae (strain ATCC 700825 / FA 1090).